We begin with the raw amino-acid sequence, 310 residues long: Homoserine kinase (310 aa).

85 to 95 (PKGLGLGSSGA) contacts ATP.

Belongs to the GHMP kinase family. Homoserine kinase subfamily.

It is found in the cytoplasm. The catalysed reaction is L-homoserine + ATP = O-phospho-L-homoserine + ADP + H(+). It participates in amino-acid biosynthesis; L-threonine biosynthesis; L-threonine from L-aspartate: step 4/5. Its function is as follows. Catalyzes the ATP-dependent phosphorylation of L-homoserine to L-homoserine phosphate. The chain is Homoserine kinase from Thermoplasma acidophilum (strain ATCC 25905 / DSM 1728 / JCM 9062 / NBRC 15155 / AMRC-C165).